A 368-amino-acid chain; its full sequence is MDPDRQADIAALDATLTTVERVIDVDGLRGRIEQLEKDASDPQLWDDQARAQKVTSDLSHAQGELRRIEELRGRLEDLPVLYELAAEEGGSDEVAEADAELTKLREDIEAMEVRTLLSGEYDEREALVTIRSGAGGVDAADWAEMLMRMYIRWAEQHKYPVEVFDTSYAEEAGIKSATFAVHAPYAYGNLSVEQGTHRLVRISPFDNQNRRQTSFADVEVLPVTETTDHIEIPEGDVRVDVYRSSGPGGQSVNTTDSAVRLTHIPTGIVVTCQNEKSQLQNKVSAMRVLQAKLLERKRLEERAEMDALKGDGGSSWGNQMRSYVLHPYQMVKDLRTEYEVGNPSAVLDGDIDGFLEAGIRWRNRKDDE.

An N5-methylglutamine modification is found at Gln-250.

The protein belongs to the prokaryotic/mitochondrial release factor family. Post-translationally, methylated by PrmC. Methylation increases the termination efficiency of RF2.

The protein localises to the cytoplasm. In terms of biological role, peptide chain release factor 2 directs the termination of translation in response to the peptide chain termination codons UGA and UAA. In Mycolicibacterium vanbaalenii (strain DSM 7251 / JCM 13017 / BCRC 16820 / KCTC 9966 / NRRL B-24157 / PYR-1) (Mycobacterium vanbaalenii), this protein is Peptide chain release factor 2.